Consider the following 568-residue polypeptide: SLAIN motif-containing protein 1 (568 aa).

5 disordered regions span residues 1–22 (MMAEQVKCASAGVSSGAGSGPV), 59–92 (LLLLPPPPPAAPPPAGLQPLGPRSPPAATATAAA), 139–162 (GGGPEPGGAGTPPGAAAAPPSPPP), 235–256 (YTSRGSPLSPQSSIDSELSTSE), and 291–403 (STSA…LRRS). A coiled-coil region spans residues 21 to 56 (PVVNAELEVKKLQELVRKLEKQNEQLRSRAASAAAA). Pro residues predominate over residues 62-74 (LPPPPPAAPPPAG). Residues 75–92 (LQPLGPRSPPAATATAAA) are compositionally biased toward low complexity. A compositionally biased stretch (gly residues) spans 139–149 (GGGPEPGGAGT). Positions 235–245 (YTSRGSPLSPQ) are enriched in polar residues. Serine 243 carries the phosphoserine modification. Low complexity-rich tracts occupy residues 246-255 (SSIDSELSTS) and 291-307 (STSASVSRHSSSVSLSS). Acidic residues predominate over residues 316–329 (QEYDQYSLEDEEEF). A compositionally biased stretch (low complexity) spans 366–384 (SSQYFPSNNYQQQQYYSPQ). The segment covering 385–395 (AQTPDQQPNRT) has biased composition (polar residues). Arginine 471 and arginine 543 each carry asymmetric dimethylarginine.

This sequence belongs to the SLAIN motif-containing family. As to quaternary structure, interacts with MAPRE1, MAPRE2, MAPRE3 and CKAP5. Interacts with ZDHHC17 (via ANK repeats). In terms of tissue distribution, expressed in embryonic stem cells. Expressed in brain.

It is found in the cytoplasm. Its subcellular location is the cytoskeleton. Microtubule plus-end tracking protein that might be involved in the regulation of cytoplasmic microtubule dynamics, microtubule organization and microtubule elongation. The chain is SLAIN motif-containing protein 1 (SLAIN1) from Homo sapiens (Human).